The sequence spans 342 residues: MKRMIALDGAQGEGGGQIMRSALSLSMITGQPFTITGIRAGRAKPGLLRQHLTAVKAATEICGATVEGAELGSQRLVFRPGTVRGGDYRFAIGSAGSCTLVLQTVLPALWFADGPSRVEVSGGTDNPSAPPADFIRRVLEPLLAKIGIHQQTTLLRHGFYPAGGGVVATEVSPVASFNTLQLGERGNIVQMRGEVLLAGVPRHVAEREIATLAASFSLHEQNIHNLPRDQGPGNTVSLEVESENITERFFVVGEKRVSAEVVAAQLVKEVKRYLASPAAVGEYLADQLVLPMALAGAGQFTVAHPSCHLLTNIAVVERFLPVRFTLAETDGVTRVMITKLTD.

ATP is bound by residues Gln103 and 283–287 (YLADQ). Residue His308 is the Tele-AMP-histidine intermediate of the active site.

Belongs to the RNA 3'-terminal cyclase family. Type 1 subfamily.

It localises to the cytoplasm. The catalysed reaction is a 3'-end 3'-phospho-ribonucleotide-RNA + ATP = a 3'-end 2',3'-cyclophospho-ribonucleotide-RNA + AMP + diphosphate. In terms of biological role, catalyzes the conversion of 3'-phosphate to a 2',3'-cyclic phosphodiester at the end of RNA. The mechanism of action of the enzyme occurs in 3 steps: (A) adenylation of the enzyme by ATP; (B) transfer of adenylate to an RNA-N3'P to produce RNA-N3'PP5'A; (C) and attack of the adjacent 2'-hydroxyl on the 3'-phosphorus in the diester linkage to produce the cyclic end product. The biological role of this enzyme is unknown but it is likely to function in some aspects of cellular RNA processing. This Escherichia coli O157:H7 protein is RNA 3'-terminal phosphate cyclase (rtcA).